We begin with the raw amino-acid sequence, 551 residues long: Small ribosomal subunit protein bS1 (551 aa).

S1 motif domains follow at residues 21–83 (GALV…LSRE), 101–167 (GEMV…VSRR), 188–256 (GQEI…LGMK), 273–343 (NSRV…LGIK), 360–430 (DEKI…LGIK), and 447–516 (DAVI…VSHK).

This sequence belongs to the bacterial ribosomal protein bS1 family.

Its function is as follows. Binds mRNA; thus facilitating recognition of the initiation point. It is needed to translate mRNA with a short Shine-Dalgarno (SD) purine-rich sequence. This Coxiella burnetii (strain RSA 493 / Nine Mile phase I) protein is Small ribosomal subunit protein bS1 (rpsA).